We begin with the raw amino-acid sequence, 320 residues long: MDVFLKLLQKDGNIVYSPVSISLSIDMIISKKGYIHRPLSPYTNYNEDTISIASRIYGDCNSLNKDPCICMDCIGDMFVLVDFDKNHKDIIDDINKWVSERTNNHIDTIIDNIGDNTKLLIVNAAYFKSSWEDEFIKEYTSIEKFWYNSTEFILVPMMSNKDIYSYGYIKDSDIKIIEIPYKDRRFSMFIPITKVYKTLCNIITIDKLAMWTSTMNLYEVDIKIPRFKVESSYELKDIIGCINMEYYIREGTELNTPSGFRHKSVIEVNEDGTTASASTCCCVADSVSNKEFYAYSPFIFYIKDNTTSDFLFVGKIISPM.

The protein belongs to the serpin family. Poxviruses subfamily.

The sequence is that of Probable serine proteinase inhibitor 1 (SPI-1) from Swinepox virus (strain Kasza) (SWPV).